We begin with the raw amino-acid sequence, 633 residues long: Glutamyl-tRNA(Gln) amidotransferase subunit E (633 aa).

A disordered region spans residues leucine 415 to aspartate 437.

It belongs to the GatB/GatE family. GatE subfamily. Heterodimer of GatD and GatE.

The enzyme catalyses L-glutamyl-tRNA(Gln) + L-glutamine + ATP + H2O = L-glutaminyl-tRNA(Gln) + L-glutamate + ADP + phosphate + H(+). Allows the formation of correctly charged Gln-tRNA(Gln) through the transamidation of misacylated Glu-tRNA(Gln) in organisms which lack glutaminyl-tRNA synthetase. The reaction takes place in the presence of glutamine and ATP through an activated gamma-phospho-Glu-tRNA(Gln). The GatDE system is specific for glutamate and does not act on aspartate. The polypeptide is Glutamyl-tRNA(Gln) amidotransferase subunit E (Saccharolobus solfataricus (strain ATCC 35092 / DSM 1617 / JCM 11322 / P2) (Sulfolobus solfataricus)).